Consider the following 151-residue polypeptide: MHKIPKGTALAFDFGEARIGVAQGDAELGLSHPLATVTGGSNDEKFAAIAKLVQEWQPRYFVVGLPVHADGTEHEMTHLSRKFGRRLNGRFNLPVYWVDERLSSVCAESLLSEAQVLGKKRKSVLDQVAAQAILHGFLEGGPAECFNGREG.

It belongs to the YqgF nuclease family.

The protein localises to the cytoplasm. Its function is as follows. Could be a nuclease involved in processing of the 5'-end of pre-16S rRNA. The polypeptide is Putative pre-16S rRNA nuclease (Neisseria gonorrhoeae (strain ATCC 700825 / FA 1090)).